Here is a 108-residue protein sequence, read N- to C-terminus: DNA-binding protein HBbu (108 aa).

Belongs to the bacterial histone-like protein family.

Functionally, histone-like DNA-binding protein which is capable of wrapping DNA to stabilize it, and thus to prevent its denaturation under extreme environmental conditions. In Borreliella japonica (Borrelia japonica), this protein is DNA-binding protein HBbu (hbb).